Here is a 90-residue protein sequence, read N- to C-terminus: LYR motif-containing protein 2 (90 aa).

A mitochondrion-targeting transit peptide spans methionine 1–arginine 19.

The protein belongs to the complex I LYR family.

It localises to the mitochondrion. Involved in efficient integration of the N-module into mitochondrial respiratory chain complex I. In Salmo salar (Atlantic salmon), this protein is LYR motif-containing protein 2 (lyrm2).